The primary structure comprises 987 residues: MATRKARNPLAFMPWPVTILTTAMYLALIIPLLVIHHNVPPAPRTSPNGLNLTEAWQDLQSLTKGFHPYNSHQNDEVRSWLLERIDAIKQSTPSTEEYRDAKEEKPDVFVFDDLVSNLTFIDKSVGVYFEGTNILVYIRGSEDNKQNWWETPGRAPVGKGGVLVNAHYDSVSTGYGATDDGVGVVTCLQLVKYFLTPGHAPRRGLVVLFNNGEEDYLNGARVYSQHPMARFAHTFLNLEGAGAGGRATLFRSSDTEVTQAYAKSEHPFGSVLSANGFEKGLISSQTDYVVLEGILGLRGLDVAFFEPRARYHTDQDDARHTSIDSLWHMLSTAVATTEELVSDTTDRFDGHIRDDGTVPSGSGTRAVWFDLFGSAFAVFRLHTLFALSVTLLIVAPLTLLVTSVILSRADKMYLFRSSVYSEINDDYIPLRGLRGFFRFPFLISIPTGVTVGLAYMVTKVNPFIAHSSSYAVWSMMISAWIFLAWFVSRVANSARPSAFHRVYTWTWMFVLTWSLMVVCTVYEHEEGLAGGYFIFFYFAGTFLATWISYLELFALPTKSEYVGRLAESRRPSTQGSRLAASGDEHQDDAAEEDPTESTSLLHGRHRPTFANYVRVGVDRASQDEEEEEEDPNVYEHEQGWSGVLPRWTWLLQLLITAPVILMLIVPLALLTTSALSQTGQDGSPQLLIYLFISCLTALLFAPMLPFIHRYTYHLPIFLLFVFIGTMIYNLVAFPFADSNRLKLFFLQEVDLDNGISTASLTGMPPFVSDVTYGLPSAAGQNESCDWTFRGKRKLQRCSWSAPLPHVVPDGDSLSVSSEDADSLLDATELSPDWISFSISHPQRDSSSVRFEVSGQNTRNCRINMDGNSITNFSVIGSSAPDHRFLNPSPDGLNRIQLWSRTWDNKWTVDVDFSKHDSSETDEVDESSITGRITCLWSDNNRVGLIPALDEVRQFSPAWVAVTKFSDGLIEGSRAFEIKRSSLGALGS.

At 1-14 (MATRKARNPLAFMP) the chain is on the cytoplasmic side. The helical transmembrane segment at 15-35 (WPVTILTTAMYLALIIPLLVI) threads the bilayer. Topologically, residues 36–384 (HHNVPPAPRT…AFAVFRLHTL (349 aa)) are vacuolar. N-linked (GlcNAc...) asparagine glycans are attached at residues asparagine 51 and asparagine 117. Positions 167 and 179 each coordinate Zn(2+). Glutamate 213 acts as the Proton acceptor in catalysis. The Zn(2+) site is built by glutamate 214, glutamate 239, and histidine 312. The helical transmembrane segment at 385-405 (FALSVTLLIVAPLTLLVTSVI) threads the bilayer. Topologically, residues 406-435 (LSRADKMYLFRSSVYSEINDDYIPLRGLRG) are cytoplasmic. The helical transmembrane segment at 436-456 (FFRFPFLISIPTGVTVGLAYM) threads the bilayer. Residues 457 to 466 (VTKVNPFIAH) lie on the Vacuolar side of the membrane. Residues 467–487 (SSSYAVWSMMISAWIFLAWFV) form a helical membrane-spanning segment. Topologically, residues 488-501 (SRVANSARPSAFHR) are cytoplasmic. Residues 502-522 (VYTWTWMFVLTWSLMVVCTVY) traverse the membrane as a helical segment. Residues 523-526 (EHEE) are Vacuolar-facing. A helical transmembrane segment spans residues 527 to 547 (GLAGGYFIFFYFAGTFLATWI). Over 548–649 (SYLELFALPT…WSGVLPRWTW (102 aa)) the chain is Cytoplasmic. Residues 572 to 600 (STQGSRLAASGDEHQDDAAEEDPTESTSL) are disordered. Residues 650–670 (LLQLLITAPVILMLIVPLALL) form a helical membrane-spanning segment. The Vacuolar segment spans residues 671 to 686 (TTSALSQTGQDGSPQL). The helical transmembrane segment at 687 to 707 (LIYLFISCLTALLFAPMLPFI) threads the bilayer. Topologically, residues 708-715 (HRYTYHLP) are cytoplasmic. The chain crosses the membrane as a helical span at residues 716–736 (IFLLFVFIGTMIYNLVAFPFA). Residues 737–987 (DSNRLKLFFL…KRSSLGALGS (251 aa)) lie on the Vacuolar side of the membrane. Asparagine 781 and asparagine 871 each carry an N-linked (GlcNAc...) asparagine glycan.

The protein belongs to the peptidase M28 family. The cofactor is Zn(2+).

The protein localises to the vacuole membrane. Functionally, may be involved in vacuolar sorting and osmoregulation. This Penicillium rubens (strain ATCC 28089 / DSM 1075 / NRRL 1951 / Wisconsin 54-1255) (Penicillium chrysogenum) protein is Vacuolar membrane protease.